Reading from the N-terminus, the 460-residue chain is MSAAPSVFLIDDDRDLRKAMQQTLELAGFTVSSFASATEALAGLSADFAGIVISDIRMPGMDGLALFRKILALDPDLPMILVTGHGDIPMAVQAIQDGAYDFIAKPFAADRLVQSARRAEEKRRLVMENRSLRRAAEAASEGLPLIGQTPVMERLRQTLKHIADTDVDVLVAGETGSGKEVVATLLHQWSRRRTGNFVALNCGALPETVIESELFGHEPGAFTGAVKKRIGRIEHASGGTLFLDEIEAMPPATQVKMLRVLEAREITPLGTNLTRPVDIRVVAAAKVDLGDPAARGDFREDLYYRLNVVTLSIPPLRERRDDIPLLFSHFLARASERFGREVPAISAAMRAYLATHSWPGNVRELSHFAERVALGVEGNLGVPAAAPASSGATLPERLERYEADILKQALTAHCGDVKETLQALGIPRKTFYDKLQRHGINRADYVERAGPGRPNAISKT.

Positions 6 to 120 (SVFLIDDDRD…RLVQSARRAE (115 aa)) constitute a Response regulatory domain. Asp-55 carries the post-translational modification 4-aspartylphosphate. A Sigma-54 factor interaction domain is found at 145 to 374 (LIGQTPVMER…LSHFAERVAL (230 aa)). Residues 173–180 (GETGSGKE) and 236–245 (ASGGTLFLDE) each bind ATP. An inter-domain linker region spans residues 332–345 (ARASERFGREVPAI). Positions 417–436 (VKETLQALGIPRKTFYDKLQ) form a DNA-binding region, H-T-H motif.

Phosphorylated by DctB.

The protein localises to the cytoplasm. In terms of biological role, member of the two-component regulatory system DctB/DctD involved in the transport of C4-dicarboxylates. When activated by DctB acts in conjunction with sigma-54 to activate the transcription of dctA. The polypeptide is C4-dicarboxylate transport transcriptional regulatory protein DctD (dctD) (Rhizobium meliloti (strain 1021) (Ensifer meliloti)).